The primary structure comprises 150 residues: Soluble pyridine nucleotide transhydrogenase (150 aa).

Belongs to the class-I pyridine nucleotide-disulfide oxidoreductase family. It depends on FAD as a cofactor.

Its subcellular location is the cytoplasm. It carries out the reaction NAD(+) + NADPH = NADH + NADP(+). Its function is as follows. Conversion of NADPH, generated by peripheral catabolic pathways, to NADH, which can enter the respiratory chain for energy generation. The sequence is that of Soluble pyridine nucleotide transhydrogenase (sthA) from Pectobacterium carotovorum subsp. carotovorum (Erwinia carotovora subsp. carotovora).